The primary structure comprises 517 residues: Maturase K (517 aa).

The protein belongs to the intron maturase 2 family. MatK subfamily.

The protein localises to the plastid. It localises to the chloroplast. Functionally, usually encoded in the trnK tRNA gene intron. Probably assists in splicing its own and other chloroplast group II introns. This Trillium grandiflorum (Large-flowered trillium) protein is Maturase K.